The primary structure comprises 445 residues: Trigger factor (445 aa).

The 86-residue stretch at 162 to 247 folds into the PPIase FKBP-type domain; the sequence is GDQITMDAVG…VKAVHTAEPT (86 aa).

This sequence belongs to the FKBP-type PPIase family. Tig subfamily.

Its subcellular location is the cytoplasm. The enzyme catalyses [protein]-peptidylproline (omega=180) = [protein]-peptidylproline (omega=0). Involved in protein export. Acts as a chaperone by maintaining the newly synthesized protein in an open conformation. Functions as a peptidyl-prolyl cis-trans isomerase. This is Trigger factor from Rickettsia bellii (strain OSU 85-389).